Consider the following 158-residue polypeptide: Transcriptional repressor NrdR (158 aa).

The segment at 3–34 (CPYCQSEDTQVKDSRPAEDGAVIRRRRVCSVC) is a zinc-finger region. Residues 49-139 (LMVVKKSGRR…VYRNFSKAVD (91 aa)) form the ATP-cone domain.

The protein belongs to the NrdR family. Requires Zn(2+) as cofactor.

In terms of biological role, negatively regulates transcription of bacterial ribonucleotide reductase nrd genes and operons by binding to NrdR-boxes. The polypeptide is Transcriptional repressor NrdR (Brucella abortus (strain S19)).